The sequence spans 279 residues: Pleckstrin homology domain-containing family F member 1 (279 aa).

The PH domain maps to 35 to 131 (VLLGEGVLTK…WISHIEECVR (97 aa)). The segment at 152–212 (DKATDICMRC…VCSLCYRELA (61 aa)) adopts an FYVE-type zinc-finger fold. Zn(2+) contacts are provided by cysteine 158, cysteine 161, cysteine 175, cysteine 178, cysteine 183, cysteine 186, cysteine 204, and cysteine 207. The disordered stretch occupies residues 219-264 (EAKERFRGSPGQLTHLGSTMCGASSGDDDDSDEDREGSGDGDWPTQ). Positions 244–253 (GDDDDSDEDR) are enriched in acidic residues.

The protein localises to the nucleus. The protein resides in the cytoplasm. It localises to the perinuclear region. Its subcellular location is the lysosome. Functionally, may induce apoptosis through the lysosomal-mitochondrial pathway. Translocates to the lysosome initiating the permeabilization of lysosomal membrane (LMP) and resulting in the release of CTSD and CTSL to the cytoplasm. Triggers the caspase-independent apoptosis by altering mitochondrial membrane permeabilization (MMP) resulting in the release of PDCD8. The polypeptide is Pleckstrin homology domain-containing family F member 1 (Plekhf1) (Rattus norvegicus (Rat)).